Consider the following 122-residue polypeptide: Protein preY, mitochondrial (122 aa).

Residues 1-40 constitute a mitochondrion transit peptide; that stretch reads MLAVRAWGRTYNTLVQRKLNAACPTGALPAVTLRPLHCSL. In terms of domain architecture, TRM112 spans 56–102; sequence DPTLLQFLVCPLSRKSLRYEESTNELINDELGIAYPIVDGIPNMIPQ.

The protein belongs to the PREY family.

It is found in the mitochondrion. In terms of biological role, in mitochondria, S-adenosylmethionine-dependent methyltransferase chaperone that supports both coenzyme Q biosynthesis and NADH:ubiquinone oxidoreductase complex (complex I, MT-ND1) assembly. The polypeptide is Protein preY, mitochondrial (pyurf) (Xenopus tropicalis (Western clawed frog)).